We begin with the raw amino-acid sequence, 156 residues long: Small ribosomal subunit protein uS7 (156 aa).

The protein belongs to the universal ribosomal protein uS7 family. In terms of assembly, part of the 30S ribosomal subunit. Contacts proteins S9 and S11.

Its function is as follows. One of the primary rRNA binding proteins, it binds directly to 16S rRNA where it nucleates assembly of the head domain of the 30S subunit. Is located at the subunit interface close to the decoding center, probably blocks exit of the E-site tRNA. In Staphylococcus saprophyticus subsp. saprophyticus (strain ATCC 15305 / DSM 20229 / NCIMB 8711 / NCTC 7292 / S-41), this protein is Small ribosomal subunit protein uS7.